The primary structure comprises 298 residues: Cytidine deaminase (298 aa).

CMP/dCMP-type deaminase domains lie at 47-167 and 186-298; these read TEQQ…FGPS and DSDD…PLLG. 88 to 90 is a binding site for substrate; that stretch reads NLE. His101 is a Zn(2+) binding site. Catalysis depends on Glu103, which acts as the Proton donor. Positions 128 and 131 each coordinate Zn(2+).

This sequence belongs to the cytidine and deoxycytidylate deaminase family. Homodimer. Zn(2+) serves as cofactor.

It catalyses the reaction cytidine + H2O + H(+) = uridine + NH4(+). The enzyme catalyses 2'-deoxycytidine + H2O + H(+) = 2'-deoxyuridine + NH4(+). Functionally, this enzyme scavenges exogenous and endogenous cytidine and 2'-deoxycytidine for UMP synthesis. The protein is Cytidine deaminase of Shewanella frigidimarina (strain NCIMB 400).